Reading from the N-terminus, the 357-residue chain is MKKVVVGMSGGVDSSVAAYLLKEAGYDVIGVTMQIWQDEDNQTVEENGGCCGLSAVDDARRVANSLDIPYYVMNFKSEFKANVMDYFVKEYQAGRTPNPCIACNRYVKWESLLTRSLQIGADYIATGHYARIVTLPNGRFALKKSATAAKDQTYALYNLTQDQLSKTLMPVGEYTKEEVREIAAKIGLLVANKPDSQEICFVPDNNYAGFIEDYTGQKIIPGNFVDTKGNILGRHQGIIHYTVGQRKGLGIALGRPAFVVEIRPETNEVVIGSNDDIFTDRLIANKLNAMAVEEFEDGMEVIAKIRYNHEGSKCTIRKVSDTEIACEFETPQRAVTPGQAVVFYQGDIVVGGGTIIK.

Residues 7–14 (GMSGGVDS) and methionine 33 each bind ATP. Cysteine 103 functions as the Nucleophile in the catalytic mechanism. Residues cysteine 103 and cysteine 200 are joined by a disulfide bond. Glycine 127 lines the ATP pocket. Positions 150 to 152 (KDQ) are interaction with tRNA. The Cysteine persulfide intermediate role is filled by cysteine 200. Positions 306–307 (RY) are interaction with tRNA.

This sequence belongs to the MnmA/TRMU family.

The protein localises to the cytoplasm. It carries out the reaction S-sulfanyl-L-cysteinyl-[protein] + uridine(34) in tRNA + AH2 + ATP = 2-thiouridine(34) in tRNA + L-cysteinyl-[protein] + A + AMP + diphosphate + H(+). In terms of biological role, catalyzes the 2-thiolation of uridine at the wobble position (U34) of tRNA, leading to the formation of s(2)U34. The polypeptide is tRNA-specific 2-thiouridylase MnmA (Lachnoclostridium phytofermentans (strain ATCC 700394 / DSM 18823 / ISDg) (Clostridium phytofermentans)).